A 606-amino-acid polypeptide reads, in one-letter code: MIKAPILQSLLASRDDLTHNPEVNNFGGKEQECLYLLKRCHNIDEFKQVHARFIKLSLFYSSSFSASSVLAKCAHSGWENSMNYAASIFRGIDDPCTFDFNTMIRGYVNVMSFEEALCFYNEMMQRGNEPDNFTYPCLLKACTRLKSIREGKQIHGQVFKLGLEADVFVQNSLINMYGRCGEMELSSAVFEKLESKTAASWSSMVSARAGMGMWSECLLLFRGMCSETNLKAEESGMVSALLACANTGALNLGMSIHGFLLRNISELNIIVQTSLVDMYVKCGCLDKALHIFQKMEKRNNLTYSAMISGLALHGEGESALRMFSKMIKEGLEPDHVVYVSVLNACSHSGLVKEGRRVFAEMLKEGKVEPTAEHYGCLVDLLGRAGLLEEALETIQSIPIEKNDVIWRTFLSQCRVRQNIELGQIAAQELLKLSSHNPGDYLLISNLYSQGQMWDDVARTRTEIAIKGLKQTPGFSIVELKGKTHRFVSQDRSHPKCKEIYKMLHQMEWQLKFEGYSPDLTQILLNVDEEEKKERLKGHSQKVAIAFGLLYTPPGSIIKIARNLRMCSDCHTYTKKISMIYEREIVVRDRNRFHLFKGGTCSCKDYW.

9 PPR repeats span residues 96 to 130 (CTFD…GNEP), 131 to 165 (DNFT…GLEA), 166 to 200 (DVFV…TAAS), 201 to 227 (WSSM…MCSE), 233 to 263 (EESG…LLRN), 268 to 298 (NIIV…MEKR), 299 to 333 (NNLT…GLEP), 334 to 368 (DHVV…GKVE), and 370 to 404 (TAEH…KNDV). Residues 405 to 480 (IWRTFLSQCR…TPGFSIVELK (76 aa)) form a type E motif region. A type E(+) motif region spans residues 481 to 511 (GKTHRFVSQDRSHPKCKEIYKMLHQMEWQLK). The interval 512 to 606 (FEGYSPDLTQ…GGTCSCKDYW (95 aa)) is type DYW motif.

Belongs to the PPR family. PCMP-H subfamily.

The protein is Pentatricopeptide repeat-containing protein At1g31920 (PCMP-H11) of Arabidopsis thaliana (Mouse-ear cress).